The sequence spans 121 residues: Cell division protein FtsB (121 aa).

Residues 1–6 (MRNWRW) lie on the Cytoplasmic side of the membrane. Residues 7–24 (LLLVLAVLLAWLQYRFWF) form a helical membrane-spanning segment. At 25–121 (GPGNSGEVMM…PASTDPVDHP (97 aa)) the chain is on the periplasmic side. Residues 31–66 (EVMMLEAQVAHQTQDNEGLRQRNQALAAEVKDLKDG) adopt a coiled-coil conformation. The interval 94 to 121 (APLPAPASPETAAPAQQAPASTDPVDHP) is disordered. Low complexity predominate over residues 101 to 121 (SPETAAPAQQAPASTDPVDHP).

It belongs to the FtsB family. Part of a complex composed of FtsB, FtsL and FtsQ.

Its subcellular location is the cell inner membrane. In terms of biological role, essential cell division protein. May link together the upstream cell division proteins, which are predominantly cytoplasmic, with the downstream cell division proteins, which are predominantly periplasmic. This chain is Cell division protein FtsB, found in Xanthomonas oryzae pv. oryzae (strain MAFF 311018).